The sequence spans 245 residues: Lactate utilization protein A (245 aa).

It belongs to the LutA/YkgE family.

Its function is as follows. Is involved in L-lactate degradation and allows cells to grow with lactate as the sole carbon source. The chain is Lactate utilization protein A from Macrococcus caseolyticus (strain JCSC5402) (Macrococcoides caseolyticum).